The primary structure comprises 940 residues: Phagocyte signaling-impaired protein (940 aa).

The stretch at 77–110 (STTLHVMTLCYKETDQLDKICQIFTSASKQLPGN) is one TPR repeat.

The protein belongs to the MDM20/NAA25 family. As to quaternary structure, component of the N-terminal acetyltransferase B (NatB) complex.

It localises to the lysosome. In terms of biological role, non-catalytic subunit of the NatB complex which catalyzes acetylation of the N-terminal methionine residues of proteins beginning with Met-Asp or Met-Glu. Has 2 roles in the larval immune response: required both for the phagocytic degradation of internalized bacteria and for the induction of Defensin in the fat body. Within the phagocytic blood cells, has a role in detection of infection and activation of the humoral immune response. The polypeptide is Phagocyte signaling-impaired protein (Aedes aegypti (Yellowfever mosquito)).